A 425-amino-acid chain; its full sequence is Histidine--tRNA ligase (425 aa).

This sequence belongs to the class-II aminoacyl-tRNA synthetase family. Homodimer.

It is found in the cytoplasm. It carries out the reaction tRNA(His) + L-histidine + ATP = L-histidyl-tRNA(His) + AMP + diphosphate + H(+). This chain is Histidine--tRNA ligase, found in Tolumonas auensis (strain DSM 9187 / NBRC 110442 / TA 4).